A 371-amino-acid polypeptide reads, in one-letter code: UDP-N-acetylglucosamine--N-acetylmuramyl-(pentapeptide) pyrophosphoryl-undecaprenol N-acetylglucosamine transferase (371 aa).

Residues 15 to 17 (TGG), Asn126, Arg169, Ser197, and Gln298 each bind UDP-N-acetyl-alpha-D-glucosamine.

The protein belongs to the glycosyltransferase 28 family. MurG subfamily.

The protein resides in the cell inner membrane. The catalysed reaction is di-trans,octa-cis-undecaprenyl diphospho-N-acetyl-alpha-D-muramoyl-L-alanyl-D-glutamyl-meso-2,6-diaminopimeloyl-D-alanyl-D-alanine + UDP-N-acetyl-alpha-D-glucosamine = di-trans,octa-cis-undecaprenyl diphospho-[N-acetyl-alpha-D-glucosaminyl-(1-&gt;4)]-N-acetyl-alpha-D-muramoyl-L-alanyl-D-glutamyl-meso-2,6-diaminopimeloyl-D-alanyl-D-alanine + UDP + H(+). It functions in the pathway cell wall biogenesis; peptidoglycan biosynthesis. Its function is as follows. Cell wall formation. Catalyzes the transfer of a GlcNAc subunit on undecaprenyl-pyrophosphoryl-MurNAc-pentapeptide (lipid intermediate I) to form undecaprenyl-pyrophosphoryl-MurNAc-(pentapeptide)GlcNAc (lipid intermediate II). The chain is UDP-N-acetylglucosamine--N-acetylmuramyl-(pentapeptide) pyrophosphoryl-undecaprenol N-acetylglucosamine transferase from Paramagnetospirillum magneticum (strain ATCC 700264 / AMB-1) (Magnetospirillum magneticum).